The sequence spans 253 residues: 5'-nucleotidase SurE (253 aa).

4 residues coordinate a divalent metal cation: Asp-8, Asp-9, Ser-40, and Asn-93.

The protein belongs to the SurE nucleotidase family. A divalent metal cation serves as cofactor.

Its subcellular location is the cytoplasm. The enzyme catalyses a ribonucleoside 5'-phosphate + H2O = a ribonucleoside + phosphate. Functionally, nucleotidase that shows phosphatase activity on nucleoside 5'-monophosphates. In Methylobacterium nodulans (strain LMG 21967 / CNCM I-2342 / ORS 2060), this protein is 5'-nucleotidase SurE.